The primary structure comprises 31 residues: U8-ctenitoxin-Co1a (31 aa).

Intrachain disulfides connect cysteine 4-cysteine 18 and cysteine 11-cysteine 24.

Expressed by the venom gland.

Its subcellular location is the secreted. In terms of biological role, blocks voltage-gated sodium channels (Nav). The chain is U8-ctenitoxin-Co1a from Ctenus ornatus (Brazilian spider).